Here is a 584-residue protein sequence, read N- to C-terminus: MSTSDGVPSTGGRSPEELASQVRLLEDEVSDLRRRLTESPGGSRGLELRLADAQRSLAGVTSQNERLAQTLREARDQIMKLKEEVDRLAQPPAGFGTFLARNDDDSIDVFTGGRKLRVNVSPSVDLDTLQRGQEVMLNEALNVVAALEFEEVGEVVMFKELLADGDRALVIANADEERVVRLAEPLRGDTIRAGDSLLLDSRAGYVYEKVPKSEVEELVLEEVPDIAYESIGGLAGQIEQIRDAVELPYLHPELFKEHQLKPPKGVLLYGPPGCGKTLIAKAVANSLAKKVAAKTGQEGKSYFLNIKGPELLNKYVGETERHIRLVFQRAREKASGGTPVIVFFDEMDSLFRTRGSGVSSDVENTIVPQLLSEIDGVEALENVLVIGASNREDMIDPAILRPGRLDVKIKIERPDAESARDIFSKYLTTTLPLHADDLSEFGGDRDACVGGMIRATVERMYTETEENRFLEVTYANGDKEVLYFKDFNSGAMIQNIVDRAKKMAIKDFLDHDQHGLRVSHLLQACVDEFKENEDLPNTTNPDDWARISGKKGERIVFIRTLITGKQGTEPGRSIDTVANTGQYL.

A coiled-coil region spans residues 16–91 (EELASQVRLL…KEEVDRLAQP (76 aa)). 273–278 (GCGKTL) is a binding site for ATP. The segment at 583–584 (YL) is docks into pockets in the proteasome alpha-ring.

This sequence belongs to the AAA ATPase family. In terms of assembly, homohexamer. Assembles into a hexameric ring structure that caps the 20S proteasome core. Strongly interacts with the prokaryotic ubiquitin-like protein Pup through a hydrophobic interface; the interacting region of ARC lies in its N-terminal coiled-coil domain. There is one Pup binding site per ARC hexamer ring. Upon ATP-binding, the C-terminus of ARC interacts with the alpha-rings of the proteasome core, possibly by binding to the intersubunit pockets.

Its pathway is protein degradation; proteasomal Pup-dependent pathway. ATPase which is responsible for recognizing, binding, unfolding and translocation of pupylated proteins into the bacterial 20S proteasome core particle. May be essential for opening the gate of the 20S proteasome via an interaction with its C-terminus, thereby allowing substrate entry and access to the site of proteolysis. Thus, the C-termini of the proteasomal ATPase may function like a 'key in a lock' to induce gate opening and therefore regulate proteolysis. In Nocardioides sp. (strain ATCC BAA-499 / JS614), this protein is Proteasome-associated ATPase.